The following is a 689-amino-acid chain: SH3 domain-binding protein 1 (689 aa).

The span at 1-11 shows a compositional bias: basic residues; the sequence is MMKRQLHRMRQ. The disordered stretch occupies residues 1–24; sequence MMKRQLHRMRQLAHTGSSGRTPET. The interaction with CGNL1 stretch occupies residues 1-275; that stretch reads MMKRQLHRMR…TAAPFSRVYG (275 aa). A BAR domain is found at 17 to 262; it reads SSGRTPETAE…RDNHSQADSS (246 aa). 2 positions are modified to phosphoserine: serine 241 and serine 262. The Rho-GAP domain maps to 276 to 469; the sequence is VSLRTHLQDL…VLIQNADTLF (194 aa). Residues 470-689 are interaction with CD2AP; it reads PGDINFSVSG…RPRGLISETD (220 aa). The interval 507–689 is disordered; that stretch reads TAATPTPTPA…RPRGLISETD (183 aa). 2 positions are modified to phosphoserine: serine 539 and serine 545. A compositionally biased stretch (pro residues) spans 565–575; sequence PARPTMPPPQP. A compositionally biased stretch (low complexity) spans 576-594; the sequence is SSSRSSPPALSLPAGSVSP. Serine 586 bears the Phosphoserine mark. Threonine 596 is modified (phosphothreonine). Residues 611–620 carry the SH3-binding motif; that stretch reads APTVPPPLPP. The segment covering 613 to 625 has biased composition (pro residues); sequence TVPPPLPPAPPQP. Serine 641 bears the Phosphoserine mark. Residues 670 to 680 show a composition bias toward pro residues; sequence PPTPVLPPQPR.

In terms of assembly, interacts with RAC1. Interacts with the exocyst via EXOC4 and EXOC8; required for the localization of both SH3BP1 and the exocyst to the leading edge of migrating cells. Interacts with CD2AP and CGNL1; probably part of a complex at cell junctions. Interacts with CAPZA1; recruits CAPZA1 to forming cell junctions. May interact with AFDN. Interacts with PLXND1; they dissociate upon SEMA3E binding to PLXND1 allowing SH3BP1 to transduce downstream signal through RAC1 inactivation. Interacts with ABL1, GRB2 and SRC (via SH3 domain).

The protein localises to the cell projection. The protein resides in the cell junction. Its subcellular location is the tight junction. It is found in the adherens junction. It localises to the phagocytic cup. The protein localises to the nucleus. The protein resides in the cytoplasm. Its subcellular location is the cytosol. GTPase activating protein/GAP which specifically converts GTP-bound Rho-type GTPases including RAC1 and CDC42 in their inactive GDP-bound form. By specifically inactivating RAC1 at the leading edge of migrating cells, it regulates the spatiotemporal organization of cell protrusions which is important for proper cell migration. Also negatively regulates CDC42 in the process of actin remodeling and the formation of epithelial cell junctions. Through its GAP activity toward RAC1 and/or CDC42 plays a specific role in phagocytosis of large particles. Specifically recruited by a PI3 kinase/PI3K-dependent mechanism to sites of large particles engagement, inactivates RAC1 and/or CDC42 allowing the reorganization of the underlying actin cytoskeleton required for engulfment. It also plays a role in angiogenesis and the process of repulsive guidance as part of a semaphorin-plexin signaling pathway. Following the binding of PLXND1 to extracellular SEMA3E it dissociates from PLXND1 and inactivates RAC1, inducing the intracellular reorganization of the actin cytoskeleton and the collapse of cells. The sequence is that of SH3 domain-binding protein 1 from Rattus norvegicus (Rat).